The following is a 426-amino-acid chain: MYVLKNGQVLNASGELENKDVLIQNGKVNLIADSIEVTSGEEFDATGKLIAPGFIDVHVHLREPGGEHKETILTGTQAAARGGYTTICSMPNTKPVPDSKEVMESLQAKIKETAKVRVLPYASITTSLGTDELVDFEALKEAGAFAFTDDGVGVQLAGTMYEAMKRAAALDMAIVAHCEDNSLIYGGVVHDGIFAEKEGLKGIPNIAESVQIARDVLLAEAAGCHYHVCHISTKESVRVVRDAKRAGIRVTAEVSPHHLILDEEAIPGNDGNWKMNPPLRSKEDRAALLEGLLDGTIDFIATDHAPHAAEEKNVPMEQAAFGIVGLETAFPLLYTHFVKTNEWTLKQLIDWMTVKPAECFKLPYGKLEEGSVADIVVLDLEKEANIDPATFYSKGKNTPFVGETCIGWPVATFSEGTLVYNEGEIK.

Zn(2+) contacts are provided by H58 and H60. Substrate is bound by residues 60-62 and N92; that span reads HLR. Zn(2+)-binding residues include D150, H177, and H230. Residue N276 participates in substrate binding. D303 is a binding site for Zn(2+). Residue D303 is part of the active site. Residues H307 and 321–322 contribute to the substrate site; that span reads FG.

Belongs to the metallo-dependent hydrolases superfamily. DHOase family. Class I DHOase subfamily. Requires Zn(2+) as cofactor.

It carries out the reaction (S)-dihydroorotate + H2O = N-carbamoyl-L-aspartate + H(+). The protein operates within pyrimidine metabolism; UMP biosynthesis via de novo pathway; (S)-dihydroorotate from bicarbonate: step 3/3. Functionally, catalyzes the reversible cyclization of carbamoyl aspartate to dihydroorotate. The polypeptide is Dihydroorotase (Listeria monocytogenes serotype 4b (strain F2365)).